The sequence spans 785 residues: MASAAPINLRAQDTPYVPPTSLPTSSSQTGSTARIQIIDDEKKFTPDLATQIERWGLRDAGFSYNIVAVFGSQSTGKSTLLNRLFGTTFDVMDETRRQQTTKGIWMCRGKDMGVMVMDVEGTDGRERGEDQDFERKSALFSLASSEILIVNLWEHQVGLYQGANMGLLKTVFEVNLGLFGKKAQDGSNGRTLLLFVIRDHIGQTPLANLQATLTADLNRIWESLSKPTDLKDRLLSDYFDLAFTALPHKILSADKFESEVQELRTRFVDKESSDYLFKPAYHKRIPADGVAFYMEGIWEQVQTNKDLDLPTQQELLAQFRCDEISAVALAEFNEQAKSQKRPVEGGRVVEGLGAMMNNWRTQALTRYDRDASRYHKGVYGRKRADLVAVLDSTLSPLFLGQLKNLHKSCLVTFKKEMLDGLHGEDYDFANVFKRAREKSERTFSEGGKEALVEGTDWSWEEELELLRDEIRAVADQCRKDETTKMINLIERNLKKHISEPVELHLGKASPDMWDEILRVFRDTLDKAEKTYLTKAKSFNCTEEENTAALDALRKRGWVALRAKIDEQTADPIILGKLRNHFEERFRYDEQGVPRVWKPDDDIDSAFMKAKDQTLDLVPLYSKISPKDTSLEFNLPSESNDSFSNDDFDLSTSPVIFTETKCLDLTNKFRRDADAYYVEAKRSTVASIAQIPYWIYGVLVVLGWNEAMLVLFNPLYFAFLLLAMATSYIIAQLGLVGPLFQVTRTVGSEIQRQATARLREHFSQPVLAEPVQVGPSRDREEVGQIQ.

The tract at residues 1–31 (MASAAPINLRAQDTPYVPPTSLPTSSSQTGS) is disordered. Residues 1–689 (MASAAPINLR…KRSTVASIAQ (689 aa)) lie on the Cytoplasmic side of the membrane. A compositionally biased stretch (low complexity) spans 22 to 31 (LPTSSSQTGS). One can recognise a GB1/RHD3-type G domain in the interval 61–281 (GFSYNIVAVF…SSDYLFKPAY (221 aa)). 71–78 (GSQSTGKS) is a binding site for GTP. Residues 458 to 482 (SWEEELELLRDEIRAVADQCRKDET) are a coiled coil. Residues 690-710 (IPYWIYGVLVVLGWNEAMLVL) traverse the membrane as a helical segment. The Lumenal segment spans residues 711–713 (FNP). A helical transmembrane segment spans residues 714–734 (LYFAFLLLAMATSYIIAQLGL). Topologically, residues 735–785 (VGPLFQVTRTVGSEIQRQATARLREHFSQPVLAEPVQVGPSRDREEVGQIQ) are cytoplasmic.

It belongs to the TRAFAC class dynamin-like GTPase superfamily. GB1/RHD3 GTPase family. RHD3 subfamily.

The protein resides in the endoplasmic reticulum membrane. Functionally, cooperates with the reticulon proteins and tubule-shaping DP1 family proteins to generate and maintain the structure of the tubular endoplasmic reticulum network. Has GTPase activity, which is required for its function in ER organization. In Laccaria bicolor (strain S238N-H82 / ATCC MYA-4686) (Bicoloured deceiver), this protein is Protein SEY1.